The primary structure comprises 169 residues: Lipoprotein signal peptidase (169 aa).

The next 4 membrane-spanning stretches (helical) occupy residues 4–24, 29–49, 70–90, and 101–121; these read PICSTGLRWLWLAVVVVILDI, WVMAHFALYESVPLIPFFNLT, WFFAGIAIGISVVLMVMMYRS, and YALIIGGALGNLYDRLVHGAV. Residues aspartate 123 and aspartate 141 contribute to the active site. A helical transmembrane segment spans residues 137–157; that stretch reads FNLADVAICIGAALVIFEGFL.

This sequence belongs to the peptidase A8 family.

It localises to the cell inner membrane. It catalyses the reaction Release of signal peptides from bacterial membrane prolipoproteins. Hydrolyzes -Xaa-Yaa-Zaa-|-(S,diacylglyceryl)Cys-, in which Xaa is hydrophobic (preferably Leu), and Yaa (Ala or Ser) and Zaa (Gly or Ala) have small, neutral side chains.. The protein operates within protein modification; lipoprotein biosynthesis (signal peptide cleavage). Its function is as follows. This protein specifically catalyzes the removal of signal peptides from prolipoproteins. In Yersinia pestis bv. Antiqua (strain Antiqua), this protein is Lipoprotein signal peptidase.